The sequence spans 241 residues: Lactate utilization protein C (241 aa).

Belongs to the LutC/YkgG family.

Is involved in L-lactate degradation and allows cells to grow with lactate as the sole carbon source. The protein is Lactate utilization protein C of Bacillus velezensis (strain DSM 23117 / BGSC 10A6 / LMG 26770 / FZB42) (Bacillus amyloliquefaciens subsp. plantarum).